The following is a 2372-amino-acid chain: Nonribosomal peptide synthase roqA (2372 aa).

An adenylation 1 region spans residues 217-610; the sequence is EHCRSQPDAE…VGRKDREVKI (394 aa). A disordered region spans residues 723–745; it reads AASSHSSTREQPSNQRDKEDVEL. The segment covering 725–736 has biased composition (polar residues); it reads SSHSSTREQPSN. Residues 750–823 enclose the Carrier 1 domain; sequence SAKENTLCSV…KIARCTAESK (74 aa). Residue Ser784 is modified to O-(pantetheine 4'-phosphoryl)serine. The condensation 1 stretch occupies residues 856–1122; it reads EDIYPCTPLQ…FATFPFRTQL (267 aa). The interval 1290-1679 is adenylation 2; sequence QPNSEAVCAW…VGRKDTQVKL (390 aa). Residues 1819–1895 form the Carrier 2 domain; sequence KPTTEQERFV…LFCKHVILIQ (77 aa). Ser1856 bears the O-(pantetheine 4'-phosphoryl)serine mark. Residues 1962 to 2227 form a condensation 2 region; it reads TSNYTSTAIF…FNVLPCRIAI (266 aa).

Its pathway is alkaloid biosynthesis. Functionally, dipeptide synthase; part of the gene cluster that mediates the biosynthesis of the mycotoxins roquefortine C and meleagrin. The first stage is catalyzed by the dipeptide synthase roqA which condenses histidine and tryptophan to produce histidyltryptophanyldiketopiperazine (HTD). HTD is then converted to roquefortine C through two possible pathways. In the first pathway, prenyltransferase roqD transforms HTD to the intermediate roquefortine D, which is in turn converted to roquefortine C by the cytochrome P450 monooxygenase roqR. In the second pathway, HTD is first converted to the intermediate dehydrohistidyltryptophanyldi-ketopiperazine (DHTD) by roqR which is then prenylated by roqD to form roquefortine C. Roquefortine C can be further transformed to meleagrin via three more reactions including oxydation to glandicolin A by roqM, which is further reduced to glandicoline B by roqO. Finally, glandicoline B is converted to meleagrin by the glandicoline B O-methyltransferase roqN. More studies identified further branching and additional metabolites produced by the roquefortine/meleagrin cluster, including roquefortine F, roquefortine L, roquefortine M, roquefortine N and neoxaline. This chain is Nonribosomal peptide synthase roqA, found in Penicillium rubens (strain ATCC 28089 / DSM 1075 / NRRL 1951 / Wisconsin 54-1255) (Penicillium chrysogenum).